The primary structure comprises 958 residues: DNA repair and recombination protein RDH54 (958 aa).

The segment at 189 to 217 (EALSQNMGNPSPPTTSTTETVPSTKNDGG) is disordered. Residues 202 to 212 (TTSTTETVPST) are compositionally biased toward low complexity. Residues 333-521 (LENDSDISGC…FTIIDFINPG (189 aa)) form the Helicase ATP-binding domain. 380–387 (IPLTGLCK) is an ATP binding site. A DEGH box motif is present at residues 506-509 (NDLN). K649 participates in a covalent cross-link: Glycyl lysine isopeptide (Lys-Gly) (interchain with G-Cter in ubiquitin). The region spanning 665–824 (KLKVLMTLLE…DSEMRNKESS (160 aa)) is the Helicase C-terminal domain.

This sequence belongs to the SNF2/RAD54 helicase family. Interacts with RAD51 and DMC1.

The protein localises to the nucleus. It carries out the reaction ATP + H2O = ADP + phosphate + H(+). Involved in the recombinational repair of double-strand breaks (DSB) in DNA during mitosis and meiosis. Has DNA dependent ATPase activity. Promotes D-loop (displacement loop) formation with RAD51 recombinase. Modifies the topology of double-stranded DNA during the D-loop reaction to facilitate the invasion of the homologous duplex molecule by the initiating single-stranded DNA substrate. Required for adaptation from G2/M checkpoint arrest induced by a double strand break, by participating in monitoring the extent of single-stranded DNA produced by resection of DNA ends. This role is distinct from its roles in recombination. Promotes colocalization of RAD51 and DMC1 during meiotic recombination. Involved in crossover interference. In Saccharomyces cerevisiae (strain ATCC 204508 / S288c) (Baker's yeast), this protein is DNA repair and recombination protein RDH54 (RDH54).